The primary structure comprises 118 residues: uncharacterized protein (118 aa).

4 consecutive transmembrane segments (helical) span residues 5 to 20 (IVFY…SVVM), 25 to 42 (VIRT…LLYF), 53 to 73 (ALAI…FIIL), and 83 to 103 (LFFT…SLSI).

It is found in the cell membrane. This is an uncharacterized protein from Bacillus subtilis (strain 168).